We begin with the raw amino-acid sequence, 151 residues long: Large ribosomal subunit protein uL13 (151 aa).

This sequence belongs to the universal ribosomal protein uL13 family. As to quaternary structure, part of the 50S ribosomal subunit.

Functionally, this protein is one of the early assembly proteins of the 50S ribosomal subunit, although it is not seen to bind rRNA by itself. It is important during the early stages of 50S assembly. The sequence is that of Large ribosomal subunit protein uL13 from Microcystis aeruginosa (strain NIES-843 / IAM M-2473).